Consider the following 398-residue polypeptide: Na(+)/H(+) antiporter NhaA (398 aa).

11 consecutive transmembrane segments (helical) span residues 21 to 41 (LGGY…NSPL), 66 to 86 (VLHW…GLEI), 101 to 121 (IVLP…VYLL), 132 to 152 (GWAI…ALLG), 161 to 181 (IFLT…IAVF), 184 to 204 (AELN…LCVL), 216 to 236 (LLVG…ATLA), 274 to 294 (LLIV…GMGI), 305 to 325 (IALG…WLAI), 343 to 363 (GVAL…ALAF), and 374 to 394 (IGVL…LRVL).

It belongs to the NhaA Na(+)/H(+) (TC 2.A.33) antiporter family.

The protein resides in the cell inner membrane. The enzyme catalyses Na(+)(in) + 2 H(+)(out) = Na(+)(out) + 2 H(+)(in). Functionally, na(+)/H(+) antiporter that extrudes sodium in exchange for external protons. The polypeptide is Na(+)/H(+) antiporter NhaA (Bordetella bronchiseptica (strain ATCC BAA-588 / NCTC 13252 / RB50) (Alcaligenes bronchisepticus)).